Here is a 148-residue protein sequence, read N- to C-terminus: WAP four-disulfide core domain protein 12 (148 aa).

The signal sequence occupies residues 1–23 (MRSYSFWFLTAFLVFATLALGEA). Residues 27 to 74 (GKEKWGNCPAEKGSCIKSGPSQCHADNDCPGDKKCCFLSCSFKCVSPD) form the WAP domain. Cystine bridges form between cysteine 34-cysteine 62, cysteine 41-cysteine 66, cysteine 49-cysteine 61, and cysteine 55-cysteine 70. The disordered stretch occupies residues 74–148 (DRIRKEGGNE…QEASPQKEWS (75 aa)).

Its subcellular location is the secreted. Antibacterial protein. Putative acid-stable proteinase inhibitor. The sequence is that of WAP four-disulfide core domain protein 12 (WFDC12) from Lemur catta (Ring-tailed lemur).